Reading from the N-terminus, the 368-residue chain is Glutamate 5-kinase (368 aa).

Lys9 contributes to the ATP binding site. Ser49, Asp136, and Asn148 together coordinate substrate. ATP-binding positions include 168 to 169 and 210 to 216; these read TD and TGGMMTK. The region spanning 275 to 353 is the PUA domain; that stretch reads AGIITIDNGA…ADIENVLGYE (79 aa).

Belongs to the glutamate 5-kinase family.

The protein localises to the cytoplasm. The catalysed reaction is L-glutamate + ATP = L-glutamyl 5-phosphate + ADP. The protein operates within amino-acid biosynthesis; L-proline biosynthesis; L-glutamate 5-semialdehyde from L-glutamate: step 1/2. Catalyzes the transfer of a phosphate group to glutamate to form L-glutamate 5-phosphate. The polypeptide is Glutamate 5-kinase (Haemophilus influenzae (strain ATCC 51907 / DSM 11121 / KW20 / Rd)).